The primary structure comprises 303 residues: Phosphatidylglycerol--prolipoprotein diacylglyceryl transferase (303 aa).

4 consecutive transmembrane segments (helical) span residues 18-38 (LGPF…LVGL), 58-78 (LLPI…VAFE), 106-126 (IWGG…SIIF), and 133-153 (EPFW…QAIG). An a 1,2-diacyl-sn-glycero-3-phospho-(1'-sn-glycerol)-binding site is contributed by Arg-154. The next 3 helical transmembrane spans lie at 193–213 (PTFL…IFLF), 223–243 (LPPG…RFWI), and 266–286 (IAQL…WRIY).

Belongs to the Lgt family.

Its subcellular location is the cell inner membrane. It carries out the reaction L-cysteinyl-[prolipoprotein] + a 1,2-diacyl-sn-glycero-3-phospho-(1'-sn-glycerol) = an S-1,2-diacyl-sn-glyceryl-L-cysteinyl-[prolipoprotein] + sn-glycerol 1-phosphate + H(+). It participates in protein modification; lipoprotein biosynthesis (diacylglyceryl transfer). Its function is as follows. Catalyzes the transfer of the diacylglyceryl group from phosphatidylglycerol to the sulfhydryl group of the N-terminal cysteine of a prolipoprotein, the first step in the formation of mature lipoproteins. The sequence is that of Phosphatidylglycerol--prolipoprotein diacylglyceryl transferase from Prochlorococcus marinus (strain NATL1A).